A 211-amino-acid polypeptide reads, in one-letter code: Cytidylate kinase (211 aa).

7–15 provides a ligand contact to ATP; sequence GPAASGKGT.

The protein belongs to the cytidylate kinase family. Type 1 subfamily.

Its subcellular location is the cytoplasm. The enzyme catalyses CMP + ATP = CDP + ADP. The catalysed reaction is dCMP + ATP = dCDP + ADP. In Rhodopseudomonas palustris (strain BisA53), this protein is Cytidylate kinase.